We begin with the raw amino-acid sequence, 365 residues long: MLIYLFEWLSHYFKGLEVFSSYISVRIIMISITSLLITLALGRPMISWLQKMQIGQIVRDDGPQSHFSKRNTPTMGGVLILSSVIISCLLWGNLTSIYLWILILVVIFFGAIGFFDDYLKLVLKHPKGLRAKHKFALQSIFSIVLAIVLFYLLSKNGQMSLSIPFSKSLYIPMGIVIFVVLAFFIINGSSNAVNLTDGLDGLAIVPVVLVAAGLGIYAYIETNSTLANYLLFNYLGNPGLAEVAVFCAAVCGSGLAFLWFNSHPAEVFMGDVGSLTLGAVLGVIAVMVRQELIFFIMGLLFVVEALSVMLQVGSYKLRNGKRIFRMAPIHHHFELKGWPETKVVIRFWIISLILFLIGFAAIKVR.

10 consecutive transmembrane segments (helical) span residues 22 to 42 (YISV…LALG), 74 to 94 (TMGG…WGNL), 95 to 115 (TSIY…IGFF), 134 to 154 (KFAL…YLLS), 168 to 188 (SLYI…IING), 201 to 221 (GLAI…AYIE), 240 to 260 (LAEV…FLWF), 267 to 287 (VFMG…IAVM), 292 to 312 (LIFF…MLQV), and 342 to 362 (KVVI…FAAI).

The protein belongs to the glycosyltransferase 4 family. MraY subfamily. The cofactor is Mg(2+).

It is found in the cell inner membrane. It carries out the reaction UDP-N-acetyl-alpha-D-muramoyl-L-alanyl-gamma-D-glutamyl-meso-2,6-diaminopimeloyl-D-alanyl-D-alanine + di-trans,octa-cis-undecaprenyl phosphate = di-trans,octa-cis-undecaprenyl diphospho-N-acetyl-alpha-D-muramoyl-L-alanyl-D-glutamyl-meso-2,6-diaminopimeloyl-D-alanyl-D-alanine + UMP. Its pathway is cell wall biogenesis; peptidoglycan biosynthesis. In terms of biological role, catalyzes the initial step of the lipid cycle reactions in the biosynthesis of the cell wall peptidoglycan: transfers peptidoglycan precursor phospho-MurNAc-pentapeptide from UDP-MurNAc-pentapeptide onto the lipid carrier undecaprenyl phosphate, yielding undecaprenyl-pyrophosphoryl-MurNAc-pentapeptide, known as lipid I. The polypeptide is Phospho-N-acetylmuramoyl-pentapeptide-transferase (Francisella tularensis subsp. holarctica (strain OSU18)).